The sequence spans 229 residues: Small ribosomal subunit protein uS2c (229 aa).

The protein belongs to the universal ribosomal protein uS2 family.

It is found in the plastid. Its subcellular location is the chloroplast. This Emiliania huxleyi (Coccolithophore) protein is Small ribosomal subunit protein uS2c (rps2).